The following is a 377-amino-acid chain: Carboxynorspermidine/carboxyspermidine decarboxylase (377 aa).

An N6-(pyridoxal phosphate)lysine modification is found at lysine 41. Positions 238 and 274 each coordinate substrate.

The protein belongs to the Orn/Lys/Arg decarboxylase class-II family. NspC subfamily. Homodimer. Requires pyridoxal 5'-phosphate as cofactor.

It localises to the cytoplasm. It catalyses the reaction carboxynorspermidine + H(+) = norspermidine + CO2. The enzyme catalyses carboxyspermidine + H(+) = spermidine + CO2. With respect to regulation, dithiothreitol greatly stimulates activity, maximum stimulation being at 5-20 mM dithiothreitol concentration. Fe(3+), Fe(2+) and Mn(2+) severely inhibit activity (88%, 82% and 50%, respectively), whereas Zn(2+) has a slightly inhibitory effect (23%) and Mg(2+), Ca(2+), Cu(2+) and Cu(+) have no effect. Catalyzes the decarboxylation of carboxynorspermidine and carboxyspermidine. 2,3-diaminopropionic acid, 2,4-diaminobutyric acid, L-ornithine or L-lysine cannot serve as substrates. The polypeptide is Carboxynorspermidine/carboxyspermidine decarboxylase (Vibrio alginolyticus).